The following is a 447-amino-acid chain: Na(+)/H(+) antiporter NhaA 2 (447 aa).

The next 11 helical transmembrane spans lie at 30–50 (FIHIESAAGIVLFISTLLAVL), 81–101 (LHKWVNDAGMTLFFFLIALEL), 117–137 (LLSIAAALGGMSTPPLFYLLL), 146–166 (GWGTVMATDTAFVIGCLALLG), 175–195 (IFMLSMAVVDDIGAIFVVAIG), 199–219 (AVDWLVLSYALLGFMLVRAMA), 220–240 (FLGVRSLVLFSIVGGAIWLVI), 315–335 (LLHPWVGFVVLPLFALANAGV), 350–370 (VFVGFVFGKPIGIVLFSWIAV), 383–403 (WGMVFGGGMLAGIGFTMALFI), and 415–435 (AAKLGIFIASITSALIGFLCL).

The protein belongs to the NhaA Na(+)/H(+) (TC 2.A.33) antiporter family.

It localises to the cell inner membrane. The catalysed reaction is Na(+)(in) + 2 H(+)(out) = Na(+)(out) + 2 H(+)(in). In terms of biological role, na(+)/H(+) antiporter that extrudes sodium in exchange for external protons. This chain is Na(+)/H(+) antiporter NhaA 2, found in Vibrio vulnificus (strain CMCP6).